A 352-amino-acid polypeptide reads, in one-letter code: Probable dual-specificity RNA methyltransferase RlmN (352 aa).

The active-site Proton acceptor is glutamate 99. Residues 105–339 (TKSRTTACVS…VTVRRSRGKD (235 aa)) form the Radical SAM core domain. Cysteine 112 and cysteine 344 are oxidised to a cystine. [4Fe-4S] cluster contacts are provided by cysteine 119, cysteine 123, and cysteine 126. S-adenosyl-L-methionine is bound by residues 170–171 (GE), serine 202, 225–227 (SLH), and asparagine 301. The S-methylcysteine intermediate role is filled by cysteine 344.

The protein belongs to the radical SAM superfamily. RlmN family. It depends on [4Fe-4S] cluster as a cofactor.

It is found in the cytoplasm. It catalyses the reaction adenosine(2503) in 23S rRNA + 2 reduced [2Fe-2S]-[ferredoxin] + 2 S-adenosyl-L-methionine = 2-methyladenosine(2503) in 23S rRNA + 5'-deoxyadenosine + L-methionine + 2 oxidized [2Fe-2S]-[ferredoxin] + S-adenosyl-L-homocysteine. The catalysed reaction is adenosine(37) in tRNA + 2 reduced [2Fe-2S]-[ferredoxin] + 2 S-adenosyl-L-methionine = 2-methyladenosine(37) in tRNA + 5'-deoxyadenosine + L-methionine + 2 oxidized [2Fe-2S]-[ferredoxin] + S-adenosyl-L-homocysteine. Specifically methylates position 2 of adenine 2503 in 23S rRNA and position 2 of adenine 37 in tRNAs. In Christiangramia forsetii (strain DSM 17595 / CGMCC 1.15422 / KT0803) (Gramella forsetii), this protein is Probable dual-specificity RNA methyltransferase RlmN.